A 91-amino-acid chain; its full sequence is DNA-directed RNA polymerase subunit omega (91 aa).

Belongs to the RNA polymerase subunit omega family. In terms of assembly, the RNAP catalytic core consists of 2 alpha, 1 beta, 1 beta' and 1 omega subunit. When a sigma factor is associated with the core the holoenzyme is formed, which can initiate transcription.

It catalyses the reaction RNA(n) + a ribonucleoside 5'-triphosphate = RNA(n+1) + diphosphate. Promotes RNA polymerase assembly. Latches the N- and C-terminal regions of the beta' subunit thereby facilitating its interaction with the beta and alpha subunits. This Yersinia pestis bv. Antiqua (strain Antiqua) protein is DNA-directed RNA polymerase subunit omega.